An 86-amino-acid chain; its full sequence is ATP synthase epsilon chain (86 aa).

This sequence belongs to the ATPase epsilon chain family. F-type ATPases have 2 components, CF(1) - the catalytic core - and CF(0) - the membrane proton channel. CF(1) has five subunits: alpha(3), beta(3), gamma(1), delta(1), epsilon(1). CF(0) has three main subunits: a, b and c.

The protein resides in the cell inner membrane. Functionally, produces ATP from ADP in the presence of a proton gradient across the membrane. The polypeptide is ATP synthase epsilon chain (atpC) (Caulobacter vibrioides (strain ATCC 19089 / CIP 103742 / CB 15) (Caulobacter crescentus)).